Reading from the N-terminus, the 644-residue chain is Threonine--tRNA ligase (644 aa).

The TGS domain occupies Met-1–Thr-61. Positions Asp-242–Pro-533 are catalytic. Zn(2+) is bound by residues Cys-333, His-384, and His-510.

It belongs to the class-II aminoacyl-tRNA synthetase family. Homodimer. Requires Zn(2+) as cofactor.

The protein localises to the cytoplasm. It catalyses the reaction tRNA(Thr) + L-threonine + ATP = L-threonyl-tRNA(Thr) + AMP + diphosphate + H(+). In terms of biological role, catalyzes the attachment of threonine to tRNA(Thr) in a two-step reaction: L-threonine is first activated by ATP to form Thr-AMP and then transferred to the acceptor end of tRNA(Thr). Also edits incorrectly charged L-seryl-tRNA(Thr). This Psychrobacter cryohalolentis (strain ATCC BAA-1226 / DSM 17306 / VKM B-2378 / K5) protein is Threonine--tRNA ligase.